The primary structure comprises 590 residues: Beta-fructofuranosidase, cell wall isozyme (590 aa).

A signal peptide spans 1–28 (MGTRPRGVVLAPWAVVLVLVLALRLAGA). The active site involves aspartate 68. Asparagine 190 and asparagine 341 each carry an N-linked (GlcNAc...) asparagine glycan.

It belongs to the glycosyl hydrolase 32 family.

The protein localises to the secreted. Its subcellular location is the cell wall. It carries out the reaction Hydrolysis of terminal non-reducing beta-D-fructofuranoside residues in beta-D-fructofuranosides.. The polypeptide is Beta-fructofuranosidase, cell wall isozyme (Zea mays (Maize)).